A 518-amino-acid polypeptide reads, in one-letter code: Calcium and calcium/calmodulin-dependent serine/threonine-protein kinase (518 aa).

The region spanning 13–300 (YEISEILGRG…AQELLSHPWV (288 aa)) is the Protein kinase domain. ATP is bound by residues 19-27 (LGRGGFSVV) and Lys44. The active-site Proton acceptor is Asp165. At Thr265 the chain carries Phosphothreonine. Residues 323 to 336 (ARRKLRAAAIASVW) form a calmodulin-binding region. The stretch at 344 to 365 (TKKLRSLVGTYDLKEEEIESLR) forms a coiled coil. 3 consecutive EF-hand domains span residues 394-429 (SLIP…LKNS), 430-465 (KGDD…LPEE), and 472-507 (TEPG…DSSL). The Ca(2+) site is built by Asp407, Asn409, Asp411, Thr413, Glu418, Asp443, Asp445, Ser447, Cys449, Glu454, Asp485, Asn487, Asp489, Lys491, and Glu496.

The protein belongs to the protein kinase superfamily. CAMK Ser/Thr protein kinase family. CaMK subfamily. In terms of assembly, interacts with IPD3. Interacts with CIP73. Post-translationally, autophosphorylation stimulated by calcium. Occurs probably by an intermolecular mechanism. Mainly expressed in roots and nodules. Detected in leaves, stems and cotyledons.

The protein resides in the nucleus. The enzyme catalyses L-seryl-[protein] + ATP = O-phospho-L-seryl-[protein] + ADP + H(+). It catalyses the reaction L-threonyl-[protein] + ATP = O-phospho-L-threonyl-[protein] + ADP + H(+). With respect to regulation, activated by calcium/calmodulin binding after calcium-induced autophosphorylation. In terms of biological role, calcium- and calmodulin-dependent protein kinase necessary and sufficient for dedifferentiation of root cortical cells into nodule initials. Not required for calcium spiking. Acts as central regulator of the nodule organogenesis program. Required for root hair curling and infection thread (IT) formation upon rhizobial infection, and arbuscule formation during arbuscular mycorrhiza (AM) fungal infection. Phosphorylates the downstream target IPD3, a protein required for root infection by symbiotic rhizobia and AM fungi. Phosphorylates the downstream target CIP73, a protein required for root nodule organogenesis. Mediates the phosphorylation of leghemoglobins (e.g. LB1) to modulate their oxygen O(2) affinity, thus regulating the diffusion of oxygen to the bacteroids in nodules. The polypeptide is Calcium and calcium/calmodulin-dependent serine/threonine-protein kinase (Lotus japonicus (Lotus corniculatus var. japonicus)).